Consider the following 159-residue polypeptide: NADH-quinone oxidoreductase subunit B (159 aa).

Residues Cys-37, Cys-38, Cys-102, and Cys-132 each contribute to the [4Fe-4S] cluster site.

It belongs to the complex I 20 kDa subunit family. In terms of assembly, NDH-1 is composed of 14 different subunits. Subunits NuoB, C, D, E, F, and G constitute the peripheral sector of the complex. Requires [4Fe-4S] cluster as cofactor.

It localises to the cell inner membrane. The enzyme catalyses a quinone + NADH + 5 H(+)(in) = a quinol + NAD(+) + 4 H(+)(out). Its function is as follows. NDH-1 shuttles electrons from NADH, via FMN and iron-sulfur (Fe-S) centers, to quinones in the respiratory chain. Couples the redox reaction to proton translocation (for every two electrons transferred, four hydrogen ions are translocated across the cytoplasmic membrane), and thus conserves the redox energy in a proton gradient. In Paraburkholderia phymatum (strain DSM 17167 / CIP 108236 / LMG 21445 / STM815) (Burkholderia phymatum), this protein is NADH-quinone oxidoreductase subunit B.